Here is a 57-residue protein sequence, read N- to C-terminus: Aminopeptidase A (57 aa).

At 1–57 (YLTDHYFKVDLNSTVTQQRFLLDPSELAGITIMQPSDSNIEWLKQYRDDVATWLENS) the chain is on the extracellular side. The N-linked (GlcNAc...) asparagine glycan is linked to N12.

This sequence belongs to the peptidase M1 family. In terms of assembly, homodimer; disulfide-linked. Requires Zn(2+) as cofactor.

Its subcellular location is the cell membrane. The enzyme catalyses Release of N-terminal glutamate (and to a lesser extent aspartate) from a peptide.. With respect to regulation, inhibited by the aminopeptidase competitive inhibitors amastatin (Leu and acidic inhibitor), and bestatin (Leu inhibitor), by chelating agents EDTA, and 1,10-Phenanthroline, as well as by Zn(2+) ions. Substrate specificity is modulated by Ca(2+), Ba(2+), and Mn(2+) ions which enhances the enzymatic activity for cleavage of acidic residues. In terms of biological role, venom protein that cleaves N-terminal acidic residues from peptides with high potency in presence of calcium. It may have several roles in venom including alteration of blood pressure by cleaving circulating angiotensin-2, general degradation of host tissue, increase of permeability to other venom components, and/or processing of other toxins in the venom. The polypeptide is Aminopeptidase A (Gloydius blomhoffii (Mamushi)).